Consider the following 534-residue polypeptide: Potential RNA-dependent RNA polymerase (534 aa).

A RdRp catalytic domain is found at 255–373 (DVVVCTDFSK…TYPGISAEDV (119 aa)).

The protein localises to the virion. It catalyses the reaction RNA(n) + a ribonucleoside 5'-triphosphate = RNA(n+1) + diphosphate. Its function is as follows. RNA-directed RNA polymerase that is involved in both transcription and genome replication. This is Potential RNA-dependent RNA polymerase (Segment-2) from Human picobirnavirus (strain Human/Thailand/Hy005102/-) (PBV).